The sequence spans 510 residues: Chorion transcription factor Cf2 (510 aa).

The span at 1-10 (MIKSTTNPQE) shows a compositional bias: polar residues. The interval 1 to 40 (MIKSTTNPQEQRLPRPEDQSPAPPPPPPSSATTSTAAPAT) is disordered. Over residues 30–40 (SATTSTAAPAT) the composition is skewed to low complexity. 2 C2H2-type zinc fingers span residues 74–97 (HYCP…QLCH) and 125–148 (HPCF…RLAH). The span at 222–237 (PEEQHHQQQLQAEHHH) shows a compositional bias: basic and acidic residues. Residues 222-279 (PEEQHHQQQLQAEHHHQQQHQQQQQQQQQQQELLEQQQREMQEQAQQQQVHHHQQDQD) form a disordered region. Low complexity predominate over residues 240 to 257 (QHQQQQQQQQQQQELLEQ). C2H2-type zinc fingers lie at residues 366-388 (HKCP…RKIH), 401-423 (YTCS…TRIH), 429-451 (FRCG…LTTH), 457-479 (FHCG…IRTH), and 485-508 (YTCP…TKLH).

As to expression, isoform I is found in embryos, pupae and adult somatic tissue; isoform II occurs in embryos, pupae, ovaries, testis and to a lesser extent in adult somatic tissue.

The protein localises to the nucleus. Its function is as follows. Transcriptional regulator; binds to the promoter region of Cp15. Also binds to its own promoter, thus having a probable autoregulatory role. This Drosophila melanogaster (Fruit fly) protein is Chorion transcription factor Cf2 (Cf2).